An 870-amino-acid chain; its full sequence is DNA topoisomerase 1 (870 aa).

The Toprim domain occupies 1–128 (MKSPRFRHSQ…RVYKSSFEAA (128 aa)). One can recognise a Topo IA-type catalytic domain in the interval 143-578 (YDGLAYSAKA…QTNAFVQKIT (436 aa)). An interaction with DNA region spans residues 180 to 185 (SSGRVQ). The active-site O-(5'-phospho-DNA)-tyrosine intermediate is the Y299. 3 consecutive C4-type zinc fingers follow at residues 603–627 (CQCP…HPNC), 693–717 (CPKC…QNGC), and 784–807 (CPLC…KRGC).

This sequence belongs to the type IA topoisomerase family. As to quaternary structure, monomer.

The enzyme catalyses ATP-independent breakage of single-stranded DNA, followed by passage and rejoining.. Releases the supercoiling and torsional tension of DNA, which is introduced during the DNA replication and transcription, by transiently cleaving and rejoining one strand of the DNA duplex. Introduces a single-strand break via transesterification at a target site in duplex DNA. The scissile phosphodiester is attacked by the catalytic tyrosine of the enzyme, resulting in the formation of a DNA-(5'-phosphotyrosyl)-enzyme intermediate and the expulsion of a 3'-OH DNA strand. The free DNA strand then undergoes passage around the unbroken strand, thus removing DNA supercoils. Finally, in the religation step, the DNA 3'-OH attacks the covalent intermediate to expel the active-site tyrosine and restore the DNA phosphodiester backbone. The polypeptide is DNA topoisomerase 1 (topX) (Bacillus anthracis).